We begin with the raw amino-acid sequence, 75 residues long: MLELNKRKEEAKVAKEQKVKAIVRTYYVIEGNKVKLKNKKCPRCGSIMAHHLKPNERWSCGKCGYTEFIGASKKR.

4 residues coordinate Zn(2+): Cys-41, Cys-44, Cys-60, and Cys-63. The C4-type zinc finger occupies 41 to 63 (CPRCGSIMAHHLKPNERWSCGKC).

The protein belongs to the eukaryotic ribosomal protein eS31 family. In terms of assembly, part of the 30S ribosomal subunit. It depends on Zn(2+) as a cofactor.

The protein is Small ribosomal subunit protein eS31 of Saccharolobus solfataricus (strain ATCC 35092 / DSM 1617 / JCM 11322 / P2) (Sulfolobus solfataricus).